A 317-amino-acid chain; its full sequence is HTH-type transcriptional regulator CfxR (317 aa).

The HTH lysR-type domain maps to 8 to 65 (LTLRQLQIFVTVARHASFVRAAEELHLTQPAVSMQVKQLESVVGMALFERVKGQLTLT). A DNA-binding region (H-T-H motif) is located at residues 25–44 (FVRAAEELHLTQPAVSMQVK).

The protein belongs to the LysR transcriptional regulatory family.

Trans-acting transcriptional regulator of RuBisCO genes (cfxLS) expression. The polypeptide is HTH-type transcriptional regulator CfxR (cfxR) (Cupriavidus necator (strain ATCC 17699 / DSM 428 / KCTC 22496 / NCIMB 10442 / H16 / Stanier 337) (Ralstonia eutropha)).